The chain runs to 269 residues: Shikimate dehydrogenase (NADP(+)) (269 aa).

Shikimate-binding positions include 14-16 and Thr-61; that span reads SLS. Lys-65 (proton acceptor) is an active-site residue. Glu-76 is a binding site for NADP(+). The shikimate site is built by Asn-85 and Asp-99. NADP(+) contacts are provided by residues 123 to 127, 146 to 151, and Ile-209; these read GAGGA and NRTPER. Residue Tyr-211 participates in shikimate binding. Gly-231 is an NADP(+) binding site.

The protein belongs to the shikimate dehydrogenase family. Homodimer.

The catalysed reaction is shikimate + NADP(+) = 3-dehydroshikimate + NADPH + H(+). It functions in the pathway metabolic intermediate biosynthesis; chorismate biosynthesis; chorismate from D-erythrose 4-phosphate and phosphoenolpyruvate: step 4/7. Involved in the biosynthesis of the chorismate, which leads to the biosynthesis of aromatic amino acids. Catalyzes the reversible NADPH linked reduction of 3-dehydroshikimate (DHSA) to yield shikimate (SA). This is Shikimate dehydrogenase (NADP(+)) from Methanothrix thermoacetophila (strain DSM 6194 / JCM 14653 / NBRC 101360 / PT) (Methanosaeta thermophila).